The primary structure comprises 185 residues: ATP synthase subunit b (185 aa).

Residues 28–48 (VVLVGFAVLMYIVVKFVVPMF) traverse the membrane as a helical segment.

The protein belongs to the ATPase B chain family. In terms of assembly, F-type ATPases have 2 components, F(1) - the catalytic core - and F(0) - the membrane proton channel. F(1) has five subunits: alpha(3), beta(3), gamma(1), delta(1), epsilon(1). F(0) has three main subunits: a(1), b(2) and c(10-14). The alpha and beta chains form an alternating ring which encloses part of the gamma chain. F(1) is attached to F(0) by a central stalk formed by the gamma and epsilon chains, while a peripheral stalk is formed by the delta and b chains.

Its subcellular location is the cell membrane. Its function is as follows. F(1)F(0) ATP synthase produces ATP from ADP in the presence of a proton or sodium gradient. F-type ATPases consist of two structural domains, F(1) containing the extramembraneous catalytic core and F(0) containing the membrane proton channel, linked together by a central stalk and a peripheral stalk. During catalysis, ATP synthesis in the catalytic domain of F(1) is coupled via a rotary mechanism of the central stalk subunits to proton translocation. Component of the F(0) channel, it forms part of the peripheral stalk, linking F(1) to F(0). The chain is ATP synthase subunit b from Paenarthrobacter aurescens (strain TC1).